A 364-amino-acid chain; its full sequence is MNVLFAGGGTGGHLYPAVAMAGELQKRVPHVKLSFAGTEAGIEAREIPRLGYRLHLLSVRGLKRGRSLGALVDNLGVLADFIGAVRSALAIINSESPDVVVGTGGFVSAPLLLAAQMRGKKTLIQEQNAFPGVTTKLLSLFASEIHLSFEEAKPYIARKKEVYISGNPSRSFSAIDPDQARLRFGLAESLPTLLVFGGSRGARSINNAVLKWLDQITASANLIWQTGSLDYERIKAGVTSSARIWIGPYIENMGEAYAASELVVCRAGASTIAEVTNTAKPSVLVPYPHATGDHQRHNARALAENGAALLIDDEHLQAPESRQLVLDLLHDRTRRSAMSKAALLLAYPDATAALVDRIIRLAKS.

UDP-N-acetyl-alpha-D-glucosamine-binding positions include 10 to 12 (TGG), Asn-128, Arg-170, Ser-199, Ile-250, and Gln-295.

This sequence belongs to the glycosyltransferase 28 family. MurG subfamily.

Its subcellular location is the cell inner membrane. The catalysed reaction is di-trans,octa-cis-undecaprenyl diphospho-N-acetyl-alpha-D-muramoyl-L-alanyl-D-glutamyl-meso-2,6-diaminopimeloyl-D-alanyl-D-alanine + UDP-N-acetyl-alpha-D-glucosamine = di-trans,octa-cis-undecaprenyl diphospho-[N-acetyl-alpha-D-glucosaminyl-(1-&gt;4)]-N-acetyl-alpha-D-muramoyl-L-alanyl-D-glutamyl-meso-2,6-diaminopimeloyl-D-alanyl-D-alanine + UDP + H(+). Its pathway is cell wall biogenesis; peptidoglycan biosynthesis. In terms of biological role, cell wall formation. Catalyzes the transfer of a GlcNAc subunit on undecaprenyl-pyrophosphoryl-MurNAc-pentapeptide (lipid intermediate I) to form undecaprenyl-pyrophosphoryl-MurNAc-(pentapeptide)GlcNAc (lipid intermediate II). This Chlorobium phaeobacteroides (strain DSM 266 / SMG 266 / 2430) protein is UDP-N-acetylglucosamine--N-acetylmuramyl-(pentapeptide) pyrophosphoryl-undecaprenol N-acetylglucosamine transferase.